A 510-amino-acid chain; its full sequence is NAD(P)H-quinone oxidoreductase subunit 2 B, chloroplastic (510 aa).

Transmembrane regions (helical) follow at residues 24 to 44 (LLLFDGSLIFPECILIFGLIL), 57 to 77 (LPWFYFISSTSLVMSITALLF), 99 to 119 (IFQFLILLCSTLCIPLSVEYI), 124 to 144 (MAITEFLLFVLTATLGGMFLC), 149 to 169 (LITIFVAPECFSFCSYLLSGY), 183 to 203 (YLLMGGASSSILVHAFSWLYG), 227 to 247 (PGISIALLFITVGIGFKLSPA), 295 to 315 (WHLLLEILAILSMILGNIIAI), 323 to 343 (MLAYSSIGQIGYVIIGIIVGD), 354 to 374 (YMLFYISMNLGTFACIVLFGL), 395 to 415 (ALSLALCLLSLGGLPPLAGFF), 428 to 448 (GLYSLVLIGLLTSVVSIYYYL), and 484 to 504 (MIVCVIASTIPGISMNPIIAI).

It belongs to the complex I subunit 2 family. In terms of assembly, NDH is composed of at least 16 different subunits, 5 of which are encoded in the nucleus.

It localises to the plastid. The protein localises to the chloroplast thylakoid membrane. The enzyme catalyses a plastoquinone + NADH + (n+1) H(+)(in) = a plastoquinol + NAD(+) + n H(+)(out). It carries out the reaction a plastoquinone + NADPH + (n+1) H(+)(in) = a plastoquinol + NADP(+) + n H(+)(out). NDH shuttles electrons from NAD(P)H:plastoquinone, via FMN and iron-sulfur (Fe-S) centers, to quinones in the photosynthetic chain and possibly in a chloroplast respiratory chain. The immediate electron acceptor for the enzyme in this species is believed to be plastoquinone. Couples the redox reaction to proton translocation, and thus conserves the redox energy in a proton gradient. The sequence is that of NAD(P)H-quinone oxidoreductase subunit 2 B, chloroplastic from Jasminum nudiflorum (Winter jasmine).